The chain runs to 322 residues: tRNA uridine(34) hydroxylase (322 aa).

The Rhodanese domain maps to 125–219 (QQEDTIVVDA…YGKDPEVQGE (95 aa)). Cys179 functions as the Cysteine persulfide intermediate in the catalytic mechanism.

This sequence belongs to the TrhO family.

It carries out the reaction uridine(34) in tRNA + AH2 + O2 = 5-hydroxyuridine(34) in tRNA + A + H2O. Its function is as follows. Catalyzes oxygen-dependent 5-hydroxyuridine (ho5U) modification at position 34 in tRNAs. In Bacillus licheniformis (strain ATCC 14580 / DSM 13 / JCM 2505 / CCUG 7422 / NBRC 12200 / NCIMB 9375 / NCTC 10341 / NRRL NRS-1264 / Gibson 46), this protein is tRNA uridine(34) hydroxylase.